The chain runs to 515 residues: 2-isopropylmalate synthase (515 aa).

One can recognise a Pyruvate carboxyltransferase domain in the interval 5-267 (VIIFDTTLRD…DTHINTQEIH (263 aa)). Mn(2+) contacts are provided by aspartate 14, histidine 202, histidine 204, and asparagine 238. Residues 392 to 515 (VLDKLSAHST…VADIKNHKHH (124 aa)) form a regulatory domain region.

It belongs to the alpha-IPM synthase/homocitrate synthase family. LeuA type 1 subfamily. Homodimer. Mn(2+) is required as a cofactor.

It is found in the cytoplasm. It catalyses the reaction 3-methyl-2-oxobutanoate + acetyl-CoA + H2O = (2S)-2-isopropylmalate + CoA + H(+). It participates in amino-acid biosynthesis; L-leucine biosynthesis; L-leucine from 3-methyl-2-oxobutanoate: step 1/4. Catalyzes the condensation of the acetyl group of acetyl-CoA with 3-methyl-2-oxobutanoate (2-ketoisovalerate) to form 3-carboxy-3-hydroxy-4-methylpentanoate (2-isopropylmalate). This chain is 2-isopropylmalate synthase, found in Haemophilus influenzae (strain ATCC 51907 / DSM 11121 / KW20 / Rd).